Consider the following 111-residue polypeptide: Phosphoribosyl-ATP pyrophosphatase (111 aa).

Belongs to the PRA-PH family.

Its subcellular location is the cytoplasm. It catalyses the reaction 1-(5-phospho-beta-D-ribosyl)-ATP + H2O = 1-(5-phospho-beta-D-ribosyl)-5'-AMP + diphosphate + H(+). It functions in the pathway amino-acid biosynthesis; L-histidine biosynthesis; L-histidine from 5-phospho-alpha-D-ribose 1-diphosphate: step 2/9. The sequence is that of Phosphoribosyl-ATP pyrophosphatase from Pseudomonas putida (strain GB-1).